We begin with the raw amino-acid sequence, 227 residues long: MAYPFQLGFQDATSPIMEELLHFHDHTLMIVFLISSLVLYIISSMLTTKLTHTSTMDAQEVETIWTILPAIILILIALPSLRILYMMDEINNPSLTVKTMGHQWYWSYEYTDYEDLTFDSYMIPTSDLKPGELRLLEVDNRVVLPMEMTIRMLISSEDVLHSWAVPSLGLKTDAIPGRLNQTTLVASRPGLYYGQCSEICGSNHSFMPIVLELVPLKHFEEWSASML.

Topologically, residues 1–14 (MAYPFQLGFQDATS) are mitochondrial intermembrane. A helical membrane pass occupies residues 15-45 (PIMEELLHFHDHTLMIVFLISSLVLYIISSM). Topologically, residues 46–59 (LTTKLTHTSTMDAQ) are mitochondrial matrix. The chain crosses the membrane as a helical span at residues 60–87 (EVETIWTILPAIILILIALPSLRILYMM). The Mitochondrial intermembrane portion of the chain corresponds to 88 to 227 (DEINNPSLTV…HFEEWSASML (140 aa)). Histidine 161, cysteine 196, glutamate 198, cysteine 200, histidine 204, and methionine 207 together coordinate Cu cation. Residue glutamate 198 coordinates Mg(2+).

Belongs to the cytochrome c oxidase subunit 2 family. Component of the cytochrome c oxidase (complex IV, CIV), a multisubunit enzyme composed of 14 subunits. The complex is composed of a catalytic core of 3 subunits MT-CO1, MT-CO2 and MT-CO3, encoded in the mitochondrial DNA, and 11 supernumerary subunits COX4I, COX5A, COX5B, COX6A, COX6B, COX6C, COX7A, COX7B, COX7C, COX8 and NDUFA4, which are encoded in the nuclear genome. The complex exists as a monomer or a dimer and forms supercomplexes (SCs) in the inner mitochondrial membrane with NADH-ubiquinone oxidoreductase (complex I, CI) and ubiquinol-cytochrome c oxidoreductase (cytochrome b-c1 complex, complex III, CIII), resulting in different assemblies (supercomplex SCI(1)III(2)IV(1) and megacomplex MCI(2)III(2)IV(2)). Found in a complex with TMEM177, COA6, COX18, COX20, SCO1 and SCO2. Interacts with TMEM177 in a COX20-dependent manner. Interacts with COX20. Interacts with COX16. The cofactor is Cu cation.

The protein resides in the mitochondrion inner membrane. It carries out the reaction 4 Fe(II)-[cytochrome c] + O2 + 8 H(+)(in) = 4 Fe(III)-[cytochrome c] + 2 H2O + 4 H(+)(out). Component of the cytochrome c oxidase, the last enzyme in the mitochondrial electron transport chain which drives oxidative phosphorylation. The respiratory chain contains 3 multisubunit complexes succinate dehydrogenase (complex II, CII), ubiquinol-cytochrome c oxidoreductase (cytochrome b-c1 complex, complex III, CIII) and cytochrome c oxidase (complex IV, CIV), that cooperate to transfer electrons derived from NADH and succinate to molecular oxygen, creating an electrochemical gradient over the inner membrane that drives transmembrane transport and the ATP synthase. Cytochrome c oxidase is the component of the respiratory chain that catalyzes the reduction of oxygen to water. Electrons originating from reduced cytochrome c in the intermembrane space (IMS) are transferred via the dinuclear copper A center (CU(A)) of subunit 2 and heme A of subunit 1 to the active site in subunit 1, a binuclear center (BNC) formed by heme A3 and copper B (CU(B)). The BNC reduces molecular oxygen to 2 water molecules using 4 electrons from cytochrome c in the IMS and 4 protons from the mitochondrial matrix. The protein is Cytochrome c oxidase subunit 2 (MT-CO2) of Equus caballus (Horse).